A 678-amino-acid chain; its full sequence is MINKGKGWRLATVAAALMMAGSAWATEYSASFKNADIEEFINTVGKNLSKTIIIEPSVRGKINVRSYDLLNEEQYYQFFLSVLDVYGFAVVPMDNGVLKVVRSKDAKTSAIPVVDETNPGIGDEMVTRVVPVRNVSVRELAPLLRQLNDNAGGGNVVHYDPSNVLLITGRAAVVNRLVEVVRRVDKAGDQEVDIIKLKYASAGEMVRLVTNLNKDGNSQGGNTSLLLAPKVVADERTNSVVVSGEPKARARIIQMVRQLDRDLQSQGNTRVFYLKYGKAKDMVEVLKGVSSSIEADKKGGGTATTAGGGASIGGGKLAISADETTNALVITAQPDVMAELEQVVAKLDIRRAQVLVEAIIVEIADGDGLNLGVQWANTNGGGTQFTNAGPGIGSVAIAAKDYKDNGTTTGLAKLAENFNGMAAGFYQGNWAMLVTALSTNTKSDILSTPSIVTMDNKEASFNVGQEVPVQTGTQNSTSGDTTFSTIERKTVGTKLVVTPQINEGDSVLLTIEQEVSSVGKQATGTDGLGPTFDTRTVKNAVLVKSGETVVLGGLMDEQTKEEVSKVPLLGDIPVLGYLFRSTSNNTSKRNLMVFIRPTILRDANVYSGISSNKYTLFRAQQLDAVAQEGYATSPDRQVLPEYGQDVTMSPEAQKQIELMKTHQQATADGVQPFVQGNK.

The first 25 residues, 1-25, serve as a signal peptide directing secretion; it reads MINKGKGWRLATVAAALMMAGSAWA. The tract at residues 26-122 is N0; sequence TEYSASFKNA…VVDETNPGIG (97 aa). Positions 124–188 are N1; that stretch reads EMVTRVVPVR…EVVRRVDKAG (65 aa). Residues 189-264 form an N2 region; it reads DQEVDIIKLK…MVRQLDRDLQ (76 aa). The interval 267–348 is N3; it reads GNTRVFYLKY…ELEQVVAKLD (82 aa). The tract at residues 353 to 602 is secretin; sequence QVLVEAIIVE…VFIRPTILRD (250 aa). The segment at 604–678 is s domain; that stretch reads NVYSGISSNK…GVQPFVQGNK (75 aa).

The protein belongs to the bacterial secretin family. GSP D subfamily. In terms of assembly, forms a cylindrical channel with 15 subunits.

It is found in the cell outer membrane. Its function is as follows. Involved in a type II secretion system (T2SS, formerly general secretion pathway, GSP) for the export of proteins. This subunit forms the outer membrane channel. In Aeromonas hydrophila, this protein is Secretin ExeD (exeD).